Reading from the N-terminus, the 160-residue chain is MHVSIFAVGRMKKGAEQALVHHYLDRFSKSCSAVGFHFKILQEISESRAPTACQRMEEEGRRLIEFLPEKCRLIVLDERGKTVSSFAFAEQLGFYRDEGVRDVIIALGGPDGHNEQIRNRADFLLSFGFMTWPHQIARILLTEQLYRAVTIASNHPYHRF.

S-adenosyl-L-methionine-binding positions include leucine 76, glycine 108, and 127-132 (FGFMTW).

Belongs to the RNA methyltransferase RlmH family. As to quaternary structure, homodimer.

Its subcellular location is the cytoplasm. The enzyme catalyses pseudouridine(1915) in 23S rRNA + S-adenosyl-L-methionine = N(3)-methylpseudouridine(1915) in 23S rRNA + S-adenosyl-L-homocysteine + H(+). Its function is as follows. Specifically methylates the pseudouridine at position 1915 (m3Psi1915) in 23S rRNA. The polypeptide is Ribosomal RNA large subunit methyltransferase H (Bartonella henselae (strain ATCC 49882 / DSM 28221 / CCUG 30454 / Houston 1) (Rochalimaea henselae)).